Consider the following 212-residue polypeptide: Large ribosomal subunit protein bL25 (212 aa).

The segment covering 1–16 has biased composition (basic and acidic residues); sequence MKTRIDLTVEPRETGK. The interval 1–22 is disordered; the sequence is MKTRIDLTVEPRETGKHNSRGL.

This sequence belongs to the bacterial ribosomal protein bL25 family. CTC subfamily. As to quaternary structure, part of the 50S ribosomal subunit; part of the 5S rRNA/L5/L18/L25 subcomplex. Contacts the 5S rRNA. Binds to the 5S rRNA independently of L5 and L18.

In terms of biological role, this is one of the proteins that binds to the 5S RNA in the ribosome where it forms part of the central protuberance. This is Large ribosomal subunit protein bL25 from Bdellovibrio bacteriovorus (strain ATCC 15356 / DSM 50701 / NCIMB 9529 / HD100).